We begin with the raw amino-acid sequence, 635 residues long: Voltage-gated potassium channel KCNC4 (635 aa).

A disordered region spans residues 1–24 (MISSVCVSSYRGRKSGNKPPSKTC). Residues 1–28 (MISSVCVSSYRGRKSGNKPPSKTCLKEE) form an inactivation gate region. Over 1-226 (MISSVCVSSY…EDPYSSRAAR (226 aa)) the chain is Cytoplasmic. 4 positions are modified to phosphoserine: Ser8, Ser9, Ser15, and Ser21. His116, Cys122, Cys143, and Cys144 together coordinate Zn(2+). The disordered stretch occupies residues 160–180 (IFESPDGGGSGAGPSDEAGDD). The chain crosses the membrane as a helical span at residues 227–247 (VVAFASLFFILVSITTFCLET). N-linked (GlcNAc...) asparagine glycans are attached at residues Asn256 and Asn265. Residues 278–298 (EPILTYIEGVCVLWFTLEFLV) form a helical membrane-spanning segment. Residues 299–312 (RIVCCPDTLDFVKN) are Cytoplasmic-facing. The helical transmembrane segment at 313 to 333 (LLNIIDFVAILPFYLEVGLSG) threads the bilayer. A helical; Voltage-sensor transmembrane segment spans residues 345-364 (FLRVVRFVRILRIFKLTRHF). The Cytoplasmic segment spans residues 365–380 (VGLRVLGHTLRASTNE). The helical transmembrane segment at 381-401 (FLLLIIFLALGVLIFATMIYY) threads the bilayer. 4 residues coordinate K(+): Thr436, Leu437, Gly438, and Tyr439. Residues 436 to 441 (TLGYGD) carry the Selectivity filter motif. A helical transmembrane segment spans residues 452–472 (VGALCALAGVLTIAMPVPVIV). The Cytoplasmic portion of the chain corresponds to 473–635 (NNFGMYYSLA…PTAGTLFLPH (163 aa)). The tract at residues 490-580 (KKRKKHVPRP…RRALRRSTTR (91 aa)) is disordered. Basic and acidic residues predominate over residues 527–542 (AREEGMIERKRADSKQ).

This sequence belongs to the potassium channel family. C (Shaw) (TC 1.A.1.2) subfamily. Kv3.4/KCNC4 sub-subfamily. As to quaternary structure, homotetramer. Heterotetramer of potassium channel proteins. Post-translationally, phosphorylation of serine residues in the inactivation gate inhibits rapid channel closure.

The protein localises to the membrane. The catalysed reaction is K(+)(in) = K(+)(out). Its function is as follows. Voltage-gated potassium channel that opens in response to the voltage difference across the membrane, forming a potassium-selective channel through which potassium ions pass in accordance with their electrochemical gradient. The channel displays rapid activation and inactivation kinetics. The sequence is that of Voltage-gated potassium channel KCNC4 from Homo sapiens (Human).